Here is a 327-residue protein sequence, read N- to C-terminus: MHRTAIFLTYRSCMRNFSTLSKTLTVSSGKVIRNGPFRRVIREKNQITKAPSVKAFKENSNSGIIKVHDPIATTILNEPTVIIERQIEFMNVFLGFEQANRYAIMDVNGNKIASMMERDFSITKAIMRQFYRLHRPFLVDVFDNWGNVIMTIKRPFSFINSHIKTIIPPSAYVDNGSDSTHYHDGKEGTTVGETIQNWHLWRRRYELFQKDGVEGSTFDQFGKIDAPFLSFDFPVTDADGKIMASVDRNWVGLGREMFTDTGVYVVRFDSQRCFDNIYPTEMLSSQVLTLDQRAVLLANAVSIDFDYFSRHSRQTGGFLSFGGGYDE.

This sequence belongs to the phospholipid scramblase family.

It localises to the mitochondrion. This chain is Altered inheritance rate of mitochondria protein 25 (AIM25), found in Saccharomyces cerevisiae (strain ATCC 204508 / S288c) (Baker's yeast).